The sequence spans 401 residues: NAD(P)H-quinone oxidoreductase subunit H, chloroplastic (401 aa).

The protein belongs to the complex I 49 kDa subunit family. As to quaternary structure, NDH is composed of at least 16 different subunits, 5 of which are encoded in the nucleus.

It localises to the plastid. The protein resides in the chloroplast thylakoid membrane. The enzyme catalyses a plastoquinone + NADH + (n+1) H(+)(in) = a plastoquinol + NAD(+) + n H(+)(out). The catalysed reaction is a plastoquinone + NADPH + (n+1) H(+)(in) = a plastoquinol + NADP(+) + n H(+)(out). Its function is as follows. NDH shuttles electrons from NAD(P)H:plastoquinone, via FMN and iron-sulfur (Fe-S) centers, to quinones in the photosynthetic chain and possibly in a chloroplast respiratory chain. The immediate electron acceptor for the enzyme in this species is believed to be plastoquinone. Couples the redox reaction to proton translocation, and thus conserves the redox energy in a proton gradient. This is NAD(P)H-quinone oxidoreductase subunit H, chloroplastic from Aethionema cordifolium (Lebanon stonecress).